Here is a 65-residue protein sequence, read N- to C-terminus: Protein translocase subunit SecE (65 aa).

Residues 38–58 traverse the membrane as a helical segment; sequence IVIVTVVFFLIFFYALDLGIG.

The protein belongs to the SecE/SEC61-gamma family. Component of the Sec protein translocase complex. Heterotrimer consisting of SecY, SecE and SecG subunits. The heterotrimers can form oligomers, although 1 heterotrimer is thought to be able to translocate proteins. Interacts with the ribosome. Interacts with SecDF, and other proteins may be involved. Interacts with SecA.

The protein resides in the cell membrane. Functionally, essential subunit of the Sec protein translocation channel SecYEG. Clamps together the 2 halves of SecY. May contact the channel plug during translocation. In Staphylococcus carnosus (strain TM300), this protein is Protein translocase subunit SecE.